The sequence spans 295 residues: Shikimate dehydrogenase (NADP(+)) (295 aa).

Shikimate contacts are provided by residues 24 to 26 (SRS) and Thr71. Catalysis depends on Lys75, which acts as the Proton acceptor. Glu87 provides a ligand contact to NADP(+). Asn96 and Asp111 together coordinate shikimate. NADP(+) contacts are provided by residues 136-140 (GAGGA), 160-165 (NRTASR), and Met233. Tyr235 serves as a coordination point for shikimate. Position 256 (Gly256) interacts with NADP(+).

Belongs to the shikimate dehydrogenase family. In terms of assembly, homodimer.

The catalysed reaction is shikimate + NADP(+) = 3-dehydroshikimate + NADPH + H(+). Its pathway is metabolic intermediate biosynthesis; chorismate biosynthesis; chorismate from D-erythrose 4-phosphate and phosphoenolpyruvate: step 4/7. Involved in the biosynthesis of the chorismate, which leads to the biosynthesis of aromatic amino acids. Catalyzes the reversible NADPH linked reduction of 3-dehydroshikimate (DHSA) to yield shikimate (SA). The sequence is that of Shikimate dehydrogenase (NADP(+)) from Cupriavidus taiwanensis (strain DSM 17343 / BCRC 17206 / CCUG 44338 / CIP 107171 / LMG 19424 / R1) (Ralstonia taiwanensis (strain LMG 19424)).